The following is a 228-amino-acid chain: Tungstate uptake system permease protein TupB (228 aa).

Helical transmembrane passes span 25–45 (IIFL…AVSI), 65–85 (VLYS…AIGL), 102–122 (AMII…TYSL), 144–164 (VIIL…VTTF), and 203–223 (MAIA…AVIY). The region spanning 26–222 (IFLSVFVSST…MISFAINAVI (197 aa)) is the ABC transmembrane type-1 domain.

The protein belongs to the binding-protein-dependent transport system permease family. In terms of assembly, the complex is composed of two ATP-binding proteins (TupC), two transmembrane proteins (TupB) and a solute-binding protein (TupA).

Its subcellular location is the cell membrane. Functionally, part of an ABC transporter complex involved in tungstate uptake. Probably responsible for the translocation of the substrate across the membrane. This chain is Tungstate uptake system permease protein TupB, found in Peptoclostridium acidaminophilum (Eubacterium acidaminophilum).